The primary structure comprises 472 residues: Glutamate--tRNA ligase 2 (472 aa).

Residues 12-22 carry the 'HIGH' region motif; that stretch reads PSPSGLLHLGN. The short motif at 253–257 is the 'KMSKS' region element; sequence PLSKR. Position 256 (Lys256) interacts with ATP.

It belongs to the class-I aminoacyl-tRNA synthetase family. Glutamate--tRNA ligase type 1 subfamily. As to quaternary structure, monomer.

It is found in the cytoplasm. The enzyme catalyses tRNA(Glu) + L-glutamate + ATP = L-glutamyl-tRNA(Glu) + AMP + diphosphate. Catalyzes the attachment of glutamate to tRNA(Glu) in a two-step reaction: glutamate is first activated by ATP to form Glu-AMP and then transferred to the acceptor end of tRNA(Glu). This Nitrosococcus oceani (strain ATCC 19707 / BCRC 17464 / JCM 30415 / NCIMB 11848 / C-107) protein is Glutamate--tRNA ligase 2.